The chain runs to 252 residues: dITP/XTP pyrophosphatase (252 aa).

7–12 is a substrate binding site; sequence THNEGK. Asp74 serves as the catalytic Proton acceptor. Asp74 lines the Mg(2+) pocket. Substrate contacts are provided by residues Ser75 and 193-196; that span reads FGYD. Residues 202–229 form a disordered region; it reads DDQPAGRVSTEPDHEGEPLTSAEMTPAE. Residues Lys230 and 235–236 each bind substrate; that span reads HR.

The protein belongs to the HAM1 NTPase family. Homodimer. It depends on Mg(2+) as a cofactor.

It carries out the reaction XTP + H2O = XMP + diphosphate + H(+). The enzyme catalyses dITP + H2O = dIMP + diphosphate + H(+). It catalyses the reaction ITP + H2O = IMP + diphosphate + H(+). In terms of biological role, pyrophosphatase that catalyzes the hydrolysis of nucleoside triphosphates to their monophosphate derivatives, with a high preference for the non-canonical purine nucleotides XTP (xanthosine triphosphate), dITP (deoxyinosine triphosphate) and ITP. Seems to function as a house-cleaning enzyme that removes non-canonical purine nucleotides from the nucleotide pool, thus preventing their incorporation into DNA/RNA and avoiding chromosomal lesions. The chain is dITP/XTP pyrophosphatase from Bifidobacterium longum (strain DJO10A).